The sequence spans 129 residues: ATP synthase epsilon chain (129 aa).

It belongs to the ATPase epsilon chain family. In terms of assembly, F-type ATPases have 2 components, CF(1) - the catalytic core - and CF(0) - the membrane proton channel. CF(1) has five subunits: alpha(3), beta(3), gamma(1), delta(1), epsilon(1). CF(0) has three main subunits: a, b and c.

Its subcellular location is the cell inner membrane. In terms of biological role, produces ATP from ADP in the presence of a proton gradient across the membrane. The polypeptide is ATP synthase epsilon chain (Campylobacter jejuni subsp. doylei (strain ATCC BAA-1458 / RM4099 / 269.97)).